A 266-amino-acid chain; its full sequence is Glucosamine-6-phosphate deaminase (266 aa).

Aspartate 72 (proton acceptor; for enolization step) is an active-site residue. Catalysis depends on aspartate 141, which acts as the For ring-opening step. The Proton acceptor; for ring-opening step role is filled by histidine 143. Catalysis depends on glutamate 148, which acts as the For ring-opening step.

It belongs to the glucosamine/galactosamine-6-phosphate isomerase family. NagB subfamily. As to quaternary structure, homohexamer.

It catalyses the reaction alpha-D-glucosamine 6-phosphate + H2O = beta-D-fructose 6-phosphate + NH4(+). It functions in the pathway amino-sugar metabolism; N-acetylneuraminate degradation; D-fructose 6-phosphate from N-acetylneuraminate: step 5/5. Its activity is regulated as follows. Allosterically activated by N-acetylglucosamine 6-phosphate (GlcNAc6P). In terms of biological role, catalyzes the reversible isomerization-deamination of glucosamine 6-phosphate (GlcN6P) to form fructose 6-phosphate (Fru6P) and ammonium ion. This chain is Glucosamine-6-phosphate deaminase, found in Yersinia enterocolitica serotype O:8 / biotype 1B (strain NCTC 13174 / 8081).